The primary structure comprises 376 residues: UDP-N-acetylglucosamine--N-acetylmuramyl-(pentapeptide) pyrophosphoryl-undecaprenol N-acetylglucosamine transferase (376 aa).

UDP-N-acetyl-alpha-D-glucosamine-binding positions include 12–14, Asn-125, Arg-165, Ser-197, and Gln-296; that span reads TGG.

The protein belongs to the glycosyltransferase 28 family. MurG subfamily.

The protein resides in the cell inner membrane. The catalysed reaction is di-trans,octa-cis-undecaprenyl diphospho-N-acetyl-alpha-D-muramoyl-L-alanyl-D-glutamyl-meso-2,6-diaminopimeloyl-D-alanyl-D-alanine + UDP-N-acetyl-alpha-D-glucosamine = di-trans,octa-cis-undecaprenyl diphospho-[N-acetyl-alpha-D-glucosaminyl-(1-&gt;4)]-N-acetyl-alpha-D-muramoyl-L-alanyl-D-glutamyl-meso-2,6-diaminopimeloyl-D-alanyl-D-alanine + UDP + H(+). The protein operates within cell wall biogenesis; peptidoglycan biosynthesis. Its function is as follows. Cell wall formation. Catalyzes the transfer of a GlcNAc subunit on undecaprenyl-pyrophosphoryl-MurNAc-pentapeptide (lipid intermediate I) to form undecaprenyl-pyrophosphoryl-MurNAc-(pentapeptide)GlcNAc (lipid intermediate II). The sequence is that of UDP-N-acetylglucosamine--N-acetylmuramyl-(pentapeptide) pyrophosphoryl-undecaprenol N-acetylglucosamine transferase from Protochlamydia amoebophila (strain UWE25).